Consider the following 163-residue polypeptide: Nucleotide-binding protein HS_0688 (163 aa).

This sequence belongs to the YajQ family.

Nucleotide-binding protein. This chain is Nucleotide-binding protein HS_0688, found in Histophilus somni (strain 129Pt) (Haemophilus somnus).